The following is a 291-amino-acid chain: Protease HtpX homolog (291 aa).

2 consecutive transmembrane segments (helical) span residues 11–31 and 34–54; these read INTF…GLLA and FLGM…ACVQ. Position 140 (His140) interacts with Zn(2+). Glu141 is an active-site residue. Residue His144 participates in Zn(2+) binding. 2 consecutive transmembrane segments (helical) span residues 155–175 and 186–206; these read IVFG…RALI and AFSF…AMLV. Position 215 (Glu215) interacts with Zn(2+).

It belongs to the peptidase M48B family. The cofactor is Zn(2+).

It is found in the cell membrane. The protein is Protease HtpX homolog of Tropheryma whipplei (strain Twist) (Whipple's bacillus).